The following is a 176-amino-acid chain: Cytochrome b (176 aa).

A run of 3 helical transmembrane segments spans residues 33-53, 77-98, and 113-133; these read FGSL…FLAM, WLLR…YLHV, and WNVG…GYVL. The heme b site is built by histidine 83 and histidine 97.

It belongs to the cytochrome b family. The cytochrome bc1 complex contains 11 subunits: 3 respiratory subunits (MT-CYB, CYC1 and UQCRFS1), 2 core proteins (UQCRC1 and UQCRC2) and 6 low-molecular weight proteins (UQCRH/QCR6, UQCRB/QCR7, UQCRQ/QCR8, UQCR10/QCR9, UQCR11/QCR10 and a cleavage product of UQCRFS1). This cytochrome bc1 complex then forms a dimer. The cofactor is heme b.

It localises to the mitochondrion inner membrane. Component of the ubiquinol-cytochrome c reductase complex (complex III or cytochrome b-c1 complex) that is part of the mitochondrial respiratory chain. The b-c1 complex mediates electron transfer from ubiquinol to cytochrome c. Contributes to the generation of a proton gradient across the mitochondrial membrane that is then used for ATP synthesis. In Tadarida brasiliensis (Brazilian free-tailed bat), this protein is Cytochrome b (MT-CYB).